The sequence spans 187 residues: GTPase KRas (187 aa).

GTP-binding positions include 10–18 (GAVGVGKSA), 29–35 (VDEYDPT), 59–60 (AG), and 116–119 (NKCA). The Effector region motif lies at 32 to 40 (YDPTIEDSY). A disordered region spans residues 168–187 (EKMSKDGKKKKKSKTKCSIL). Cys-184 carries the cysteine methyl ester modification. Cys-184 is lipidated: S-farnesyl cysteine. Residues 185 to 187 (SIL) constitute a propeptide, removed in mature form.

It belongs to the small GTPase superfamily. Ras family.

It is found in the cell membrane. The protein resides in the cytoplasm. It carries out the reaction GTP + H2O = GDP + phosphate + H(+). Its activity is regulated as follows. Alternates between an inactive form bound to GDP and an active form bound to GTP. Activated by a guanine nucleotide-exchange factor (GEF) and inactivated by a GTPase-activating protein (GAP). Functionally, ras proteins bind GDP/GTP and possess intrinsic GTPase activity. Plays an important role in the regulation of cell proliferation. In Xenopus laevis (African clawed frog), this protein is GTPase KRas (kras).